Consider the following 831-residue polypeptide: Phenylalanine--tRNA ligase beta subunit (831 aa).

In terms of domain architecture, tRNA-binding spans 44-155 (GPVDGPVTVG…GAAEPGADGA (112 aa)). The B5 domain occupies 414 to 489 (WSPPPIRMGV…RLEGLEVIPS (76 aa)). Mg(2+) contacts are provided by D467, D473, E476, and E477. Positions 737-830 (SPYPAVFQDV…AAERVGAVLR (94 aa)) constitute an FDX-ACB domain.

It belongs to the phenylalanyl-tRNA synthetase beta subunit family. Type 1 subfamily. Tetramer of two alpha and two beta subunits. Mg(2+) serves as cofactor.

Its subcellular location is the cytoplasm. The catalysed reaction is tRNA(Phe) + L-phenylalanine + ATP = L-phenylalanyl-tRNA(Phe) + AMP + diphosphate + H(+). This chain is Phenylalanine--tRNA ligase beta subunit, found in Mycobacterium bovis (strain ATCC BAA-935 / AF2122/97).